Reading from the N-terminus, the 312-residue chain is Coiled-coil domain-containing protein 42 homolog (312 aa).

Coiled coils occupy residues 34–121 and 172–233; these read RLLE…RLKE and ATHQ…WESQ.

This sequence belongs to the CFAP73 family.

The chain is Coiled-coil domain-containing protein 42 homolog from Nematostella vectensis (Starlet sea anemone).